The chain runs to 401 residues: Stearoyl-[acyl-carrier-protein] 9-desaturase 3, chloroplastic (401 aa).

The interval 1 to 31 (MSMALLLTSPAMKQKPAVITSPRRGSSPSRR) is disordered. The transit peptide at 1–35 (MSMALLLTSPAMKQKPAVITSPRRGSSPSRRLRVS) directs the protein to the chloroplast. Glu140, Glu178, His181, Glu231, Glu264, and His267 together coordinate Fe cation.

The protein belongs to the fatty acid desaturase type 2 family. Homodimer. It depends on Fe(2+) as a cofactor. As to expression, ubiquitously expressed with a preference in leaves, flowers and stems.

It is found in the plastid. The protein resides in the chloroplast. It catalyses the reaction octadecanoyl-[ACP] + 2 reduced [2Fe-2S]-[ferredoxin] + O2 + 2 H(+) = (9Z)-octadecenoyl-[ACP] + 2 oxidized [2Fe-2S]-[ferredoxin] + 2 H2O. It participates in lipid metabolism; fatty acid metabolism. In terms of biological role, converts stearoyl-ACP to oleoyl-ACP by introduction of a cis double bond between carbons 9 and 10 of the acyl chain. Also able to convert palmitoyl-ACP to palmitoleoyl-ACP at the C9 position. Exhibits delta-9 palmitoyl-[acyl-carrier-protein] desaturase (PAD) activity. Involved in omega-7 monounsaturated fatty acid biosynthesis, especially in the endosperm oil. The sequence is that of Stearoyl-[acyl-carrier-protein] 9-desaturase 3, chloroplastic (S-ACP-DES3) from Arabidopsis thaliana (Mouse-ear cress).